Here is a 391-residue protein sequence, read N- to C-terminus: Phosphoprotein (391 aa).

2 positions are modified to phosphothreonine: T10 and T16. Over residues 54–65 (QKNIQHPTASHQ) the composition is skewed to polar residues. Disordered regions lie at residues 54–98 (QKNI…EPLF) and 145–186 (TSTP…RSGS). Phosphoserine is present on S69. T91, T150, and T165 each carry phosphothreonine. Position 188 is a phosphoserine (S188). Residues 218–245 (ANEIMDLLRGMDARLQHLEQKVDKVLAQ) are a coiled coil. Residue T250 is modified to Phosphothreonine. At S257 the chain carries Phosphoserine. T258 and T282 each carry phosphothreonine. S292 and S294 each carry phosphoserine. The residue at position 298 (T298) is a Phosphothreonine. Residues S301 and S374 each carry the phosphoserine modification. The interval 343 to 391 (AGRKVMITKMITDCVANPQMKQAFEQRLAKASTEDALNDIKRDIIRNAI) is interaction with the nucleoprotein. Residue T375 is modified to Phosphothreonine.

This sequence belongs to the rubulavirus/avulavirus P protein family. Homotetramer. Interacts (via multimerization domain) with polymerase L; this interaction forms the polymerase L-P complex. Interacts (via N-terminus) with N0 (via Ncore); this interaction allows P to chaperon N0 to avoid N polymerization before encapsidation. Interacts (via C-terminus) with N-RNA template; this interaction positions the polymerase on the template for both transcription and replication. Interacts with host RPS6KB1 kinase; this interaction may play a role in the viral replication and transcription.

It is found in the virion. Its function is as follows. Essential cofactor of the RNA polymerase L that plays a central role in the transcription and replication by forming the polymerase complex with RNA polymerase L and recruiting L to the genomic N-RNA template for RNA synthesis. Also plays a central role in the encapsidation of nascent RNA chains by forming the encapsidation complex with the nucleocapsid protein N (N-P complex). Acts as a chaperone for newly synthesized free N protein, so-called N0, allowing encapsidation of nascent RNA chains during replication. The nucleoprotein protein N prevents excessive phosphorylation of P, which leads to down-regulation of viral transcription/ replication. Participates, together with N, in the formation of viral factories (viroplasms), which are large inclusions in the host cytoplasm where replication takes place. In Mumps virus genotype N (strain L-Zagreb vaccine) (MuV), this protein is Phosphoprotein.